The following is a 423-amino-acid chain: MTITQPDLSVFETVESEVRSYCRGWPTVFDRAQGSRMYDEDGHAYLDFFAGAGSLNYGHNNPVLKRALIDYLERDGVTHGLDMSTAAKRAFLESFQNLILRPRDLPYKVMFPGPTGTNAVESALKLARKVKGREAIVSFTNAFHGMSLGSLAVTGNAFKRAGAGIPLVHGTPMPFDNYFDGKVPDFLWFERLLEDQGSGLNKPAAVIVETVQGEGGINVARPEWLRALAELCKRQDMLLIVDDIQMGCGRTGAFFSFEEAGVTPDIVTVSKSISGYGLPMSLCLFKPELDIWEPGEHNGTFRGNNPAFVTAAAALQTYWADGSAMEKQTLARGEQVEQALISITEENLADVKEYRGRGLVWGIEFKDKDRAGRIAQRAFELGLLIETSGPESEVVKLLPALTITPEELDEGLRTLARAVRETA.

At Lys271 the chain carries N6-(pyridoxal phosphate)lysine.

It belongs to the class-III pyridoxal-phosphate-dependent aminotransferase family. The cofactor is pyridoxal 5'-phosphate.

The enzyme catalyses L-2,4-diaminobutanoate + 2-oxoglutarate = L-aspartate 4-semialdehyde + L-glutamate. It functions in the pathway amine and polyamine biosynthesis; ectoine biosynthesis; L-ectoine from L-aspartate 4-semialdehyde: step 1/3. Functionally, catalyzes reversively the conversion of L-aspartate beta-semialdehyde (ASA) to L-2,4-diaminobutyrate (DABA) by transamination with L-glutamate. In Streptomyces avermitilis (strain ATCC 31267 / DSM 46492 / JCM 5070 / NBRC 14893 / NCIMB 12804 / NRRL 8165 / MA-4680), this protein is Diaminobutyrate--2-oxoglutarate transaminase (ectB).